Here is a 688-residue protein sequence, read N- to C-terminus: Protein sel-1 homolog 2 (688 aa).

Residues 1 to 18 (MNPLALLVEILIIIEVTT) form the signal peptide. Over 19–662 (KNTEAERYNR…KWKWLKLDST (644 aa)) the chain is Extracellular. Residue N34 is glycosylated (N-linked (GlcNAc...) asparagine). Sel1-like repeat units follow at residues 107–142 (GDEL…NMGN), 143–178 (LKAM…KEGS), 179–214 (YKAQ…AGGS), 215–250 (MMSQ…DYIA), 297–333 (VQIQ…KAGS), 334–370 (ANAM…SKGN), 371–406 (AIGL…EKGW), 407–442 (PNAQ…QSGQ), 443–478 (PLAI…ELGH), 551–586 (AFAR…DKHH), and 588–623 (AQAM…QTSP). An N-linked (GlcNAc...) asparagine glycan is attached at N162. A helical transmembrane segment spans residues 663-683 (VGPYWDLLVIGLIVAMLIFLL). Residues 684–688 (RNRHR) are Cytoplasmic-facing.

The protein belongs to the sel-1 family.

It localises to the membrane. The protein localises to the cell projection. The protein resides in the cilium. Its subcellular location is the nucleus speckle. The polypeptide is Protein sel-1 homolog 2 (Sel1l2) (Mus musculus (Mouse)).